The sequence spans 305 residues: Methionyl-tRNA formyltransferase (305 aa).

Ser109–Pro112 contributes to the (6S)-5,6,7,8-tetrahydrofolate binding site.

This sequence belongs to the Fmt family.

The catalysed reaction is L-methionyl-tRNA(fMet) + (6R)-10-formyltetrahydrofolate = N-formyl-L-methionyl-tRNA(fMet) + (6S)-5,6,7,8-tetrahydrofolate + H(+). Functionally, attaches a formyl group to the free amino group of methionyl-tRNA(fMet). The formyl group appears to play a dual role in the initiator identity of N-formylmethionyl-tRNA by promoting its recognition by IF2 and preventing the misappropriation of this tRNA by the elongation apparatus. The sequence is that of Methionyl-tRNA formyltransferase from Roseobacter denitrificans (strain ATCC 33942 / OCh 114) (Erythrobacter sp. (strain OCh 114)).